The primary structure comprises 223 residues: Glutathione-specific gamma-glutamylcyclotransferase 1 (223 aa).

Positions 1 to 26 (MKQESASQSTPPPSLSPAPSSAQPSW) are disordered. Residue 36–41 (IFGYGS) coordinates substrate. The active-site Proton acceptor is the Glu-116.

Belongs to the gamma-glutamylcyclotransferase family. ChaC subfamily. Interacts with NOTCH1 (via extracellular region). As to expression, widely expressed, with high expression in forebrain and anterior spinal cord. Expressed at intermediate level in the dorsal aorta and heart. Present throughout adult brain (at protein level).

It is found in the cytoplasm. Its subcellular location is the cytosol. The protein localises to the golgi apparatus. The protein resides in the trans-Golgi network. The catalysed reaction is glutathione = L-cysteinylglycine + 5-oxo-L-proline. Its function is as follows. Catalyzes the cleavage of glutathione into 5-oxo-L-proline and a Cys-Gly dipeptide. Acts specifically on glutathione, but not on other gamma-glutamyl peptides. Glutathione depletion is an important factor for apoptosis initiation and execution. Acts as a pro-apoptotic component of the unfolded protein response pathway by mediating the pro-apoptotic effects of the ATF4-ATF3-DDIT3/CHOP cascade. Negative regulator of Notch signaling pathway involved in embryonic neurogenesis: acts by inhibiting Notch cleavage by furin, maintaining Notch in an immature inactive form, thereby promoting neurogenesis in embryos. This chain is Glutathione-specific gamma-glutamylcyclotransferase 1, found in Mus musculus (Mouse).